Here is a 207-residue protein sequence, read N- to C-terminus: Fibronectin type III domain-containing protein 5b (207 aa).

An N-terminal signal peptide occupies residues 1–26 (MWGIKGSFAVLLLLFLAYIFASSVNA). Residues 27-146 (DSLSAPLNVT…EEVGQAAQLR (120 aa)) are Extracellular-facing. The 92-residue stretch at 31-122 (APLNVTIKAL…EPVLFRTPKE (92 aa)) folds into the Fibronectin type-III domain. Asn-34 and Asn-79 each carry an N-linked (GlcNAc...) asparagine glycan. The chain crosses the membrane as a helical span at residues 147–167 (AGELIIIVVVLVMWAGVIALF). Topologically, residues 168–207 (CRQYDIIKDNEPNNNKDKAKNSSECSTPEHPTGGLLRSKV) are cytoplasmic. Residues 178–188 (EPNNNKDKAKN) are compositionally biased toward basic and acidic residues. Residues 178–207 (EPNNNKDKAKNSSECSTPEHPTGGLLRSKV) form a disordered region. The Microbody targeting signal motif lies at 205 to 207 (SKV).

As to quaternary structure, dimer; may exist in other oligomeric forms. In terms of processing, the extracellular domain is cleaved and released from the cell membrane.

Its subcellular location is the cell membrane. The protein localises to the peroxisome membrane. The protein resides in the secreted. May mediate beneficial effects of muscular exercise. The chain is Fibronectin type III domain-containing protein 5b (fndc5b) from Danio rerio (Zebrafish).